A 274-amino-acid chain; its full sequence is Putative pyruvate, phosphate dikinase regulatory protein (274 aa).

150–157 contacts ADP; sequence GPSRTSKT.

It belongs to the pyruvate, phosphate/water dikinase regulatory protein family. PDRP subfamily.

The enzyme catalyses N(tele)-phospho-L-histidyl/L-threonyl-[pyruvate, phosphate dikinase] + ADP = N(tele)-phospho-L-histidyl/O-phospho-L-threonyl-[pyruvate, phosphate dikinase] + AMP + H(+). It catalyses the reaction N(tele)-phospho-L-histidyl/O-phospho-L-threonyl-[pyruvate, phosphate dikinase] + phosphate + H(+) = N(tele)-phospho-L-histidyl/L-threonyl-[pyruvate, phosphate dikinase] + diphosphate. Its function is as follows. Bifunctional serine/threonine kinase and phosphorylase involved in the regulation of the pyruvate, phosphate dikinase (PPDK) by catalyzing its phosphorylation/dephosphorylation. The sequence is that of Putative pyruvate, phosphate dikinase regulatory protein from Rickettsia peacockii (strain Rustic).